An 81-amino-acid chain; its full sequence is UPF0248 protein SSO2687 (81 aa).

This sequence belongs to the UPF0248 family.

This chain is UPF0248 protein SSO2687, found in Saccharolobus solfataricus (strain ATCC 35092 / DSM 1617 / JCM 11322 / P2) (Sulfolobus solfataricus).